A 94-amino-acid chain; its full sequence is MASVGECPAPVPVKDKKLLEVKLGELPSWILMRDFSPSGIFGAFQRGYYRYYNKYINVKKGSISGITMVLACYVLFSYSFSYKHLKHERLRKYH.

An N-acetylalanine modification is found at alanine 2. Serine 3 bears the Phosphoserine mark. Lysine 22 is modified (N6-acetyllysine). The helical transmembrane segment at 68 to 85 threads the bilayer; that stretch reads MVLACYVLFSYSFSYKHL.

Belongs to the ATPase F chain family. In terms of assembly, component of the ATP synthase complex composed at least of ATP5F1A/subunit alpha, ATP5F1B/subunit beta, ATP5MC1/subunit c (homooctomer), MT-ATP6/subunit a, MT-ATP8/subunit 8, ATP5ME/subunit e, ATP5MF/subunit f, ATP5MG/subunit g, ATP5MK/subunit k, ATP5MJ/subunit j, ATP5F1C/subunit gamma, ATP5F1D/subunit delta, ATP5F1E/subunit epsilon, ATP5PF/subunit F6, ATP5PB/subunit b, ATP5PD/subunit d, ATP5PO/subunit OSCP. ATP synthase complex consists of a soluble F(1) head domain (subunits alpha(3) and beta(3)) - the catalytic core - and a membrane F(0) domain - the membrane proton channel (subunits c, a, 8, e, f, g, k and j). These two domains are linked by a central stalk (subunits gamma, delta, and epsilon) rotating inside the F1 region and a stationary peripheral stalk (subunits F6, b, d, and OSCP).

Its subcellular location is the mitochondrion. The protein resides in the mitochondrion inner membrane. Functionally, subunit f, of the mitochondrial membrane ATP synthase complex (F(1)F(0) ATP synthase or Complex V) that produces ATP from ADP in the presence of a proton gradient across the membrane which is generated by electron transport complexes of the respiratory chain. ATP synthase complex consist of a soluble F(1) head domain - the catalytic core - and a membrane F(1) domain - the membrane proton channel. These two domains are linked by a central stalk rotating inside the F(1) region and a stationary peripheral stalk. During catalysis, ATP synthesis in the catalytic domain of F(1) is coupled via a rotary mechanism of the central stalk subunits to proton translocation. In vivo, can only synthesize ATP although its ATP hydrolase activity can be activated artificially in vitro. Part of the complex F(0) domain. This Homo sapiens (Human) protein is ATP synthase F(0) complex subunit f, mitochondrial.